Here is a 124-residue protein sequence, read N- to C-terminus: Large ribosomal subunit protein bL17 (124 aa).

This sequence belongs to the bacterial ribosomal protein bL17 family. Part of the 50S ribosomal subunit. Contacts protein L32.

This chain is Large ribosomal subunit protein bL17, found in Mycoplasma pneumoniae (strain ATCC 29342 / M129 / Subtype 1) (Mycoplasmoides pneumoniae).